A 223-amino-acid polypeptide reads, in one-letter code: Probable GTP-binding protein EngB (223 aa).

An EngB-type G domain is found at 49–223 (MGVEIAFAGR…LRAALAGLTD (175 aa)). GTP-binding positions include 57 to 64 (GRSNVGKS), 84 to 88 (GRTKQ), 102 to 105 (DMPG), 169 to 172 (TKAD), and 203 to 205 (TSS). Mg(2+) is bound by residues Ser-64 and Thr-86.

It belongs to the TRAFAC class TrmE-Era-EngA-EngB-Septin-like GTPase superfamily. EngB GTPase family. Mg(2+) is required as a cofactor.

Necessary for normal cell division and for the maintenance of normal septation. The protein is Probable GTP-binding protein EngB of Granulibacter bethesdensis (strain ATCC BAA-1260 / CGDNIH1).